A 103-amino-acid polypeptide reads, in one-letter code: Small ribosomal subunit protein uS10 (103 aa).

It belongs to the universal ribosomal protein uS10 family. Part of the 30S ribosomal subunit.

Functionally, involved in the binding of tRNA to the ribosomes. The sequence is that of Small ribosomal subunit protein uS10 from Korarchaeum cryptofilum (strain OPF8).